Here is a 194-residue protein sequence, read N- to C-terminus: Ras-related protein Rab-22A (194 aa).

12–20 is a binding site for GTP; sequence GDTGVGKSS. Residues 34 to 42 carry the Effector region motif; it reads INPTIGASF. Residues 60–64, 118–121, and 148–150 each bind GTP; these read DTAGQ, NKCD, and SAK. A disordered region spans residues 170-194; sequence DANPPSGGKGFKLRRQPSEPQRSCC. Residues Cys-193 and Cys-194 are each lipidated (S-geranylgeranyl cysteine).

Belongs to the small GTPase superfamily. Rab family. In terms of assembly, interacts directly with ZFYVE20. Interacts (in its GTP-bound form) with RINL and RABGEF1. Binds EEA1.

The protein localises to the endosome membrane. Its subcellular location is the cell membrane. The protein resides in the early endosome. It localises to the late endosome. It is found in the cell projection. The protein localises to the ruffle. Its subcellular location is the cytoplasmic vesicle. The protein resides in the phagosome. It localises to the phagosome membrane. Its function is as follows. Plays a role in endocytosis and intracellular protein transport. Mediates trafficking of TF from early endosomes to recycling endosomes. Required for NGF-mediated endocytosis of NTRK1, and subsequent neurite outgrowth. Binds GTP and GDP and has low GTPase activity. Alternates between a GTP-bound active form and a GDP-bound inactive form. This chain is Ras-related protein Rab-22A (RAB22A), found in Canis lupus familiaris (Dog).